A 530-amino-acid polypeptide reads, in one-letter code: Ubiquitin carboxyl-terminal hydrolase 17-like protein 20 (530 aa).

The 296-residue stretch at 80–375 (AGLQNMGNTC…QAYVLFYIQK (296 aa)) folds into the USP domain. C89 serves as the catalytic Nucleophile. The Proton acceptor role is filled by H334. Basic and acidic residues-rich tracts occupy residues 382–392 (SESVSRGREPR) and 398–413 (DTDR…RDHP). 2 disordered regions span residues 382–413 (SESV…RDHP) and 509–530 (RGRA…LVCQ). Positions 510 to 524 (GRARRSKGKNKHSKR) are enriched in basic residues.

It belongs to the peptidase C19 family. USP17 subfamily.

Its subcellular location is the nucleus. The protein resides in the endoplasmic reticulum. The catalysed reaction is Thiol-dependent hydrolysis of ester, thioester, amide, peptide and isopeptide bonds formed by the C-terminal Gly of ubiquitin (a 76-residue protein attached to proteins as an intracellular targeting signal).. In terms of biological role, deubiquitinating enzyme that removes conjugated ubiquitin from specific proteins to regulate different cellular processes that may include cell proliferation, progression through the cell cycle, apoptosis, cell migration, and the cellular response to viral infection. In Homo sapiens (Human), this protein is Ubiquitin carboxyl-terminal hydrolase 17-like protein 20 (USP17L20).